The following is a 258-amino-acid chain: 3-deoxy-manno-octulosonate cytidylyltransferase (258 aa).

The protein belongs to the KdsB family.

The protein resides in the cytoplasm. The enzyme catalyses 3-deoxy-alpha-D-manno-oct-2-ulosonate + CTP = CMP-3-deoxy-beta-D-manno-octulosonate + diphosphate. Its pathway is nucleotide-sugar biosynthesis; CMP-3-deoxy-D-manno-octulosonate biosynthesis; CMP-3-deoxy-D-manno-octulosonate from 3-deoxy-D-manno-octulosonate and CTP: step 1/1. The protein operates within bacterial outer membrane biogenesis; lipopolysaccharide biosynthesis. Its function is as follows. Activates KDO (a required 8-carbon sugar) for incorporation into bacterial lipopolysaccharide in Gram-negative bacteria. This Blochmanniella floridana protein is 3-deoxy-manno-octulosonate cytidylyltransferase.